A 353-amino-acid polypeptide reads, in one-letter code: Photosystem II protein D1 (353 aa).

An N-acetylthreonine modification is found at T2. T2 carries the phosphothreonine modification. Helical transmembrane passes span 29–46 (YIGW…TATS), 118–133 (HFLL…EWEL), and 142–156 (WIAV…AATA). H118 lines the chlorophyll a pocket. Y126 contacts pheophytin a. Residues D170 and E189 each coordinate [CaMn4O5] cluster. Residues 197-218 (FHMLGVAGVFGGSLFSAMHGSL) traverse the membrane as a helical segment. H198 provides a ligand contact to chlorophyll a. A quinone is bound by residues H215 and 264–265 (SF). H215 is a Fe cation binding site. Residue H272 participates in Fe cation binding. Residues 274–288 (FLAAWPVVGIWFTAL) form a helical membrane-spanning segment. The [CaMn4O5] cluster site is built by H332, E333, D342, and A344. A propeptide spanning residues 345–353 (AVEAPSING) is cleaved from the precursor.

Belongs to the reaction center PufL/M/PsbA/D family. PSII is composed of 1 copy each of membrane proteins PsbA, PsbB, PsbC, PsbD, PsbE, PsbF, PsbH, PsbI, PsbJ, PsbK, PsbL, PsbM, PsbT, PsbX, PsbY, PsbZ, Psb30/Ycf12, at least 3 peripheral proteins of the oxygen-evolving complex and a large number of cofactors. It forms dimeric complexes. The D1/D2 heterodimer binds P680, chlorophylls that are the primary electron donor of PSII, and subsequent electron acceptors. It shares a non-heme iron and each subunit binds pheophytin, quinone, additional chlorophylls, carotenoids and lipids. D1 provides most of the ligands for the Mn4-Ca-O5 cluster of the oxygen-evolving complex (OEC). There is also a Cl(-1) ion associated with D1 and D2, which is required for oxygen evolution. The PSII complex binds additional chlorophylls, carotenoids and specific lipids. is required as a cofactor. Post-translationally, tyr-161 forms a radical intermediate that is referred to as redox-active TyrZ, YZ or Y-Z. In terms of processing, C-terminally processed by CTPA; processing is essential to allow assembly of the oxygen-evolving complex and thus photosynthetic growth.

Its subcellular location is the plastid. It localises to the chloroplast thylakoid membrane. It carries out the reaction 2 a plastoquinone + 4 hnu + 2 H2O = 2 a plastoquinol + O2. Functionally, this is one of the two reaction center proteins of photosystem II. In terms of biological role, photosystem II (PSII) is a light-driven water:plastoquinone oxidoreductase that uses light energy to abstract electrons from H(2)O, generating O(2) and a proton gradient subsequently used for ATP formation. It consists of a core antenna complex that captures photons, and an electron transfer chain that converts photonic excitation into a charge separation. The D1/D2 (PsbA/PsbD) reaction center heterodimer binds P680, the primary electron donor of PSII as well as several subsequent electron acceptors. In Pisum sativum (Garden pea), this protein is Photosystem II protein D1.